A 117-amino-acid chain; its full sequence is Large ribosomal subunit protein bL20 (117 aa).

The protein belongs to the bacterial ribosomal protein bL20 family.

Functionally, binds directly to 23S ribosomal RNA and is necessary for the in vitro assembly process of the 50S ribosomal subunit. It is not involved in the protein synthesizing functions of that subunit. This is Large ribosomal subunit protein bL20 from Acetivibrio thermocellus (strain ATCC 27405 / DSM 1237 / JCM 9322 / NBRC 103400 / NCIMB 10682 / NRRL B-4536 / VPI 7372) (Clostridium thermocellum).